The chain runs to 1201 residues: Kinesin-like protein costa (1201 aa).

In terms of domain architecture, Kinesin motor spans 4–391 (PIQVAVRIFP…LQFAFKVQCV (388 aa)). The tract at residues 23 to 92 (SFGPTEPKKD…NGNDSGQKDY (70 aa)) is disordered. Residues 28–56 (EPKKDAQAVDEGADSKDSEAQVPAAEKDN) are compositionally biased toward basic and acidic residues. Positions 57–75 (PSISETDPNGNAEQDSAAD) are enriched in polar residues. 175–182 (GQRGQGKS) provides a ligand contact to ATP. 3 disordered regions span residues 502 to 536 (AEEP…PDLD), 565 to 606 (HPKA…GASL), and 618 to 639 (ASQQ…ESSS). A compositionally biased stretch (low complexity) spans 510–521 (SEAANSESPNSD). A phosphoserine mark is found at Ser-599 and Ser-605. Coiled-coil stretches lie at residues 652–821 (AATA…ELVK) and 968–1001 (TKVI…ERVL).

It belongs to the TRAFAC class myosin-kinesin ATPase superfamily. Kinesin family. KIF27 subfamily. Homodimer (Potential). Binds microtubules. Interacts with ci, smo, sgg, CkIalpha and protein kinase A catalytic subunit. Interacts (via kinesin motor domain) with Ubr3. Post-translationally, polyubiquitinated by Ubr3, which leads to proteasomal degradation.

It is found in the cytoplasm. The protein localises to the cytoskeleton. Regulates cubitus interruptus (ci) processing by recruiting multiple kinases to promote its efficient phosphorylation. Scaffolds multiple kinases and ci into proximity to promote its hyperphosphorylation, which then targets it for SCFSlimb/proteasome-mediated processing to generate its repressor form. Hh signaling inhibits ci phosphorylation by interfering with the cos-ci-kinases complex formation. Negatively regulates hh-signaling pathways during various processes, including photoreceptor differentiation. May negatively regulate a hh-signaling pathway which functions in the intestinal immune response to bacterial uracil by activating the Duox-dependent production of reactive oxygen species (ROS). This chain is Kinesin-like protein costa (cos), found in Drosophila melanogaster (Fruit fly).